Here is a 217-residue protein sequence, read N- to C-terminus: Glutathione S-transferase 1 (217 aa).

Residues methionine 1–aspartate 83 form the GST N-terminal domain. Glutathione-binding positions include serine 11, histidine 53–valine 55, and aspartate 67–histidine 69. The GST C-terminal domain occupies aspartate 89–leucine 211.

The protein belongs to the GST superfamily. Theta family. As to quaternary structure, homodimer.

It catalyses the reaction RX + glutathione = an S-substituted glutathione + a halide anion + H(+). Conjugation of reduced glutathione to a wide number of exogenous and endogenous hydrophobic electrophiles. The polypeptide is Glutathione S-transferase 1 (GST1) (Manduca sexta (Tobacco hawkmoth)).